The chain runs to 285 residues: Bifunctional protein FolD (285 aa).

NADP(+) is bound by residues 165 to 167, Ser-190, and Ile-231; that span reads GRS.

It belongs to the tetrahydrofolate dehydrogenase/cyclohydrolase family. As to quaternary structure, homodimer.

The enzyme catalyses (6R)-5,10-methylene-5,6,7,8-tetrahydrofolate + NADP(+) = (6R)-5,10-methenyltetrahydrofolate + NADPH. It carries out the reaction (6R)-5,10-methenyltetrahydrofolate + H2O = (6R)-10-formyltetrahydrofolate + H(+). It functions in the pathway one-carbon metabolism; tetrahydrofolate interconversion. Catalyzes the oxidation of 5,10-methylenetetrahydrofolate to 5,10-methenyltetrahydrofolate and then the hydrolysis of 5,10-methenyltetrahydrofolate to 10-formyltetrahydrofolate. The polypeptide is Bifunctional protein FolD (Magnetococcus marinus (strain ATCC BAA-1437 / JCM 17883 / MC-1)).